A 101-amino-acid polypeptide reads, in one-letter code: Gamma-secretase subunit PEN-2 (101 aa).

Over 1 to 17 the chain is Cytoplasmic; the sequence is MNLERVSNEEKLNLCRK. The segment at residues 18 to 36 is an intramembrane region (helical); sequence YYLGGFAFLPFLWLVNIFW. Residues 37–57 are Cytoplasmic-facing; sequence FFKEAFFAPAYTEQSQIKGYV. The chain crosses the membrane as a helical span at residues 58–78; it reads WRSAVGFLFWVIVLTTWITIF. Residues 79-101 lie on the Lumenal side of the membrane; it reads QIYRPRWGALGDYLSFTIPLGTP.

Belongs to the PEN-2 family. As to quaternary structure, the functional gamma-secretase complex is composed of at least four polypeptides: a presenilin homodimer (PSEN1 or PSEN2), nicastrin (NCSTN), APH1 (APH1A or APH1B) and PSENEN.

Its subcellular location is the endoplasmic reticulum membrane. It is found in the golgi apparatus. It localises to the golgi stack membrane. The protein resides in the cell membrane. The protein localises to the membrane. In terms of biological role, essential subunit of the gamma-secretase complex, an endoprotease complex that catalyzes the intramembrane cleavage of integral membrane proteins such as Notch receptors and APP (amyloid-beta precursor protein). The gamma-secretase complex plays a role in Notch and Wnt signaling cascades and regulation of downstream processes via its role in processing key regulatory proteins, and by regulating cytosolic CTNNB1 levels. PSENEN modulates both endoproteolysis of presenilin and gamma-secretase activity. The polypeptide is Gamma-secretase subunit PEN-2 (Psenen) (Rattus norvegicus (Rat)).